The sequence spans 329 residues: Putative dehydrogenase RB0419 (329 aa).

This sequence belongs to the ornithine cyclodeaminase/mu-crystallin family.

The polypeptide is Putative dehydrogenase RB0419 (Rhizobium meliloti (strain 1021) (Ensifer meliloti)).